Consider the following 715-residue polypeptide: MHLLPALAGVLATLVLAQPCEGTDPASPGAVETSVLRDCIAEAKLLVDAAYNWTQKSIKQRLRSGSASPMDLLSYFKQPVAATRTVVRAADYMHVALGLLEEKLQPQRSGPFNVTDVLTEPQLRLLSQASGCALRDQAERCSDKYRTITGRCNNKRRPLLGASNQALARWLPAEYEDGLSLPFGWTPSRRRNGFLLPLVRAVSNQIVRFPNERLTSDRGRALMFMQWGQFIDHDLDFSPESPARVAFTAGVDCERTCAQLPPCFPIKIPPNDPRIKNQRDCIPFFRSAPSCPQNKNRVRNQINALTSFVDASMVYGSEVSLSLRLRNRTNYLGLLAINQRFQDNGRALLPFDNLHDDPCLLTNRSARIPCFLAGDTRSTETPKLAAMHTLFMREHNRLATELRRLNPRWNGDKLYNEARKIMGAMVQIITYRDFLPLVLGKARARRTLGHYRGYCSNVDPRVANVFTLAFRFGHTMLQPFMFRLDSQYRASAPNSHVPLSSAFFASWRIVYEGGIDPILRGLMATPAKLNRQDAMLVDELRDRLFRQVRRIGLDLAALNMQRSRDHGLPGYNAWRRFCGLSQPRNLAQLSRVLKNQDLARKFLNLYGTPDNIDIWIGAIAEPLLPGARVGPLLACLFENQFRRARDGDRFWWQKRGVFTKRQRKALSRISLSRIICDNTGITTVSRDIFRANIYPRGFVNCSRIPRLNLSAWRGT.

The first 17 residues, methionine 1 to alanine 17, serve as a signal peptide directing secretion. Residues glutamine 18 to glutamate 139 constitute a propeptide that is removed on maturation. Residues asparagine 52 and asparagine 113 are each glycosylated (N-linked (GlcNAc...) asparagine). A disulfide bond links cysteine 141 and cysteine 152. Residue aspartate 232 coordinates heme b. The Proton acceptor role is filled by histidine 233. Aspartate 234 contributes to the Ca(2+) binding site. Intrachain disulfides connect cysteine 253-cysteine 263 and cysteine 257-cysteine 281. Ca(2+)-binding residues include threonine 306, phenylalanine 308, aspartate 310, and serine 312. N-linked (GlcNAc...) asparagine glycosylation is found at asparagine 327 and asparagine 363. Cysteine 359 and cysteine 370 are oxidised to a cystine. Heme b is bound by residues glutamate 380 and histidine 474. Position 488 is a 3'-nitrotyrosine (tyrosine 488). 2 cysteine pairs are disulfide-bonded: cysteine 578/cysteine 635 and cysteine 676/cysteine 701. 2 N-linked (GlcNAc...) asparagine glycosylation sites follow: asparagine 700 and asparagine 708.

This sequence belongs to the peroxidase family. XPO subfamily. Tetramer of two light chains and two heavy chains. Ca(2+) is required as a cofactor. The cofactor is heme b.

The protein localises to the cytoplasmic granule. The catalysed reaction is 2 a phenolic donor + H2O2 = 2 a phenolic radical donor + 2 H2O. Functionally, mediates tyrosine nitration of secondary granule proteins in mature resting eosinophils. Shows significant inhibitory activity towards Mycobacterium tuberculosis H37Rv by inducing bacterial fragmentation and lysis. This chain is Eosinophil peroxidase (EPX), found in Homo sapiens (Human).